The chain runs to 320 residues: MQIRNTFSSLKGEITRFISVSLMIYIITRASISNAYPIFAQQGFENPREATGRIVCANCHLANKPVDIEVPQAVLPDTVFEAVVRIPYDMQLKQVLANGKKGALNVGAVLILPEGFELAPPDRISPEMKEKIGKLSFQTYRPTKKNILVIGPVPGQKYSEITFPILSPNPATNKDAYFLKYPIYVGGNRGRGQIYPDGNKSNNTVYNATSAGIVSKIIRKEKGGYEITITDASNGREVVDIIPPGPELRVSEGQSIKLDQPLTSNPNVGGFGQADAEIVLQDPLRVQGLLFFLASVVLAQIFLVLKKKQFEKVQLSEMNF.

The signal sequence occupies residues M1 to A35. 4 residues coordinate heme: Y36, C56, C59, and H60. A helical membrane pass occupies residues V286–K306.

The protein belongs to the cytochrome f family. In terms of assembly, the 4 large subunits of the cytochrome b6-f complex are cytochrome b6, subunit IV (17 kDa polypeptide, petD), cytochrome f and the Rieske protein, while the 4 small subunits are PetG, PetL, PetM and PetN. The complex functions as a dimer. Heme is required as a cofactor.

The protein localises to the plastid. Its subcellular location is the chloroplast thylakoid membrane. Component of the cytochrome b6-f complex, which mediates electron transfer between photosystem II (PSII) and photosystem I (PSI), cyclic electron flow around PSI, and state transitions. This is Cytochrome f from Citrus sinensis (Sweet orange).